We begin with the raw amino-acid sequence, 602 residues long: Zinc finger protein 652-B (602 aa).

A disordered region spans residues 60 to 232 (FQDSKPTNEV…PSDKAKSEEK (173 aa)). Positions 65–79 (PTNEVHAVKGERENS) are enriched in basic and acidic residues. Composition is skewed to acidic residues over residues 80–108 (GESE…DEDE) and 148–167 (DDEG…DEEN). The span at 222-232 (SPSDKAKSEEK) shows a compositional bias: basic and acidic residues. The C2H2-type 1 zinc-finger motif lies at 235 to 258 (LTCDKCPRVFNTRWYLEKHMNVTH). The C2H2-type 2; degenerate zinc finger occupies 262–284 (QICDKCGKKFVLESELSLHLQTD). 6 C2H2-type zinc fingers span residues 289-312 (IQCI…KIVH), 319-341 (FSCE…LVAH), 347-369 (FTCE…SLQH), 375-397 (FRCE…MSIH), 403-425 (FMCQ…MKTH), and 431-453 (FICE…RRTH). The segment at 459 to 482 (YPCDVCGMRFRFSNMLKAHKEKCF) adopts a C2H2-type 9; degenerate zinc-finger fold. The disordered stretch occupies residues 543–575 (PFSHLHLHPHSHTHHLAVPPVPHLPPPPALFKS). Positions 545-557 (SHLHLHPHSHTHH) are enriched in basic residues. Pro residues predominate over residues 561–571 (PPVPHLPPPPA).

The protein belongs to the krueppel C2H2-type zinc-finger protein family.

The protein resides in the nucleus. Its function is as follows. May be involved in transcriptional regulation. The protein is Zinc finger protein 652-B (znf652-b) of Xenopus laevis (African clawed frog).